A 112-amino-acid polypeptide reads, in one-letter code: cAMP-regulated phosphoprotein 19 (112 aa).

Met-1 carries the N-acetylmethionine modification. The segment covering 1-11 has biased composition (low complexity); sequence MSAEVPEAASA. The tract at residues 1–49 is disordered; the sequence is MSAEVPEAASAEEQKEMEDKVTSPEKAEEAKLKARYPHLGQKPGGSDFL. Ser-2 carries the post-translational modification N-acetylserine. Residues Ser-2 and Ser-23 each carry the phosphoserine modification. Basic and acidic residues predominate over residues 12–32; that stretch reads EEQKEMEDKVTSPEKAEEAKL. Ser-62 and Ser-104 each carry phosphoserine; by GWL. A disordered region spans residues 73-112; the sequence is KNKQLPTAAPDKTEVTGDHIPTPQDLPQRKPSLVASKLAG. Position 104 is a phosphoserine; by PKA (Ser-104). Lys-109 is modified (N6-acetyllysine).

The protein belongs to the endosulfine family. In terms of assembly, interacts (when phosphorylated at Ser-62) with PPP2R2D. Interacts with SNCA. Interacts with PPP2R2A; the interaction is direct and this interaction inhibits PP2A activity. In terms of processing, phosphorylation at Ser-62 by MASTL/GWL during mitosis is essential for interaction with PPP2R2D (PR55-delta) and subsequent inactivation of PP2A. Phosphorylated by PKA.

The protein localises to the cytoplasm. Protein phosphatase inhibitor that specifically inhibits protein phosphatase 2A (PP2A) during mitosis. Inhibition of PP2A is enhanced when ARPP19 is phosphorylated. When phosphorylated at Ser-62 during mitosis, specifically interacts with PPP2R2D (PR55-delta) and inhibits its activity, leading to inactivation of PP2A, an essential condition to keep cyclin-B1-CDK1 activity high during M phase. May indirectly enhance GAP-43 expression. In Homo sapiens (Human), this protein is cAMP-regulated phosphoprotein 19 (ARPP19).